Here is a 309-residue protein sequence, read N- to C-terminus: Probable manganese-dependent inorganic pyrophosphatase (309 aa).

Mn(2+)-binding residues include H9, D13, D15, D75, H97, and D149.

The protein belongs to the PPase class C family. Mn(2+) is required as a cofactor.

It localises to the cytoplasm. It catalyses the reaction diphosphate + H2O = 2 phosphate + H(+). This is Probable manganese-dependent inorganic pyrophosphatase from Bacillus cereus (strain G9842).